The chain runs to 240 residues: UDP-2,3-diacylglucosamine hydrolase (240 aa).

Residues D7, H9, D40, N78, and H113 each coordinate Mn(2+). 78 to 79 (NR) lines the substrate pocket. D121, S159, K166, and H194 together coordinate substrate. Residues H194 and H196 each contribute to the Mn(2+) site.

It belongs to the LpxH family. Mn(2+) is required as a cofactor.

It localises to the cell inner membrane. The enzyme catalyses UDP-2-N,3-O-bis[(3R)-3-hydroxytetradecanoyl]-alpha-D-glucosamine + H2O = 2-N,3-O-bis[(3R)-3-hydroxytetradecanoyl]-alpha-D-glucosaminyl 1-phosphate + UMP + 2 H(+). It participates in glycolipid biosynthesis; lipid IV(A) biosynthesis; lipid IV(A) from (3R)-3-hydroxytetradecanoyl-[acyl-carrier-protein] and UDP-N-acetyl-alpha-D-glucosamine: step 4/6. Functionally, hydrolyzes the pyrophosphate bond of UDP-2,3-diacylglucosamine to yield 2,3-diacylglucosamine 1-phosphate (lipid X) and UMP by catalyzing the attack of water at the alpha-P atom. Involved in the biosynthesis of lipid A, a phosphorylated glycolipid that anchors the lipopolysaccharide to the outer membrane of the cell. This Pseudomonas putida (strain ATCC 700007 / DSM 6899 / JCM 31910 / BCRC 17059 / LMG 24140 / F1) protein is UDP-2,3-diacylglucosamine hydrolase.